The sequence spans 159 residues: MRCPFCAHDNSQVKDSRPSEDNTSIRRRRQCEGCGARFTTFERVQLREVVVVKSGERREPFDRSKIEQSVALACRKRPVNQERLDQLVSGIQRQIETMGDAEVASKVIGEMVMEGLRQLDSVAYIRFASVYRDFTEARDFEEFASSVQEMSVHEVSGGE.

Residues 1-26 (MRCPFCAHDNSQVKDSRPSEDNTSIR) form a disordered region. A zinc finger lies at 3–34 (CPFCAHDNSQVKDSRPSEDNTSIRRRRQCEGC). The segment covering 11–24 (SQVKDSRPSEDNTS) has biased composition (basic and acidic residues). The ATP-cone domain occupies 49–139 (VVVVKSGERR…VYRDFTEARD (91 aa)).

It belongs to the NrdR family. Zn(2+) serves as cofactor.

In terms of biological role, negatively regulates transcription of bacterial ribonucleotide reductase nrd genes and operons by binding to NrdR-boxes. The polypeptide is Transcriptional repressor NrdR (Novosphingobium aromaticivorans (strain ATCC 700278 / DSM 12444 / CCUG 56034 / CIP 105152 / NBRC 16084 / F199)).